The following is a 318-amino-acid chain: tRNA uridine(34) hydroxylase (318 aa).

The 95-residue stretch at 123 to 217 folds into the Rhodanese domain; it reads EDDDTVIIDA…YGKDPETKSE (95 aa). Cys-177 functions as the Cysteine persulfide intermediate in the catalytic mechanism.

Belongs to the TrhO family.

It catalyses the reaction uridine(34) in tRNA + AH2 + O2 = 5-hydroxyuridine(34) in tRNA + A + H2O. Catalyzes oxygen-dependent 5-hydroxyuridine (ho5U) modification at position 34 in tRNAs. The polypeptide is tRNA uridine(34) hydroxylase (Staphylococcus aureus (strain COL)).